Here is a 167-residue protein sequence, read N- to C-terminus: Urease accessory protein UreE (167 aa).

The protein belongs to the UreE family.

The protein localises to the cytoplasm. Involved in urease metallocenter assembly. Binds nickel. Probably functions as a nickel donor during metallocenter assembly. This chain is Urease accessory protein UreE, found in Pseudomonas aeruginosa (strain UCBPP-PA14).